The chain runs to 227 residues: Cytochrome c oxidase subunit 2 (227 aa).

Residues 1–26 lie on the Mitochondrial intermembrane side of the membrane; the sequence is MNTWMNFNLQNSNSPLMEQLMFFHNH. Residues 27–48 traverse the membrane as a helical segment; the sequence is SMLIILLITILVGYIMSSLLYN. The Mitochondrial matrix portion of the chain corresponds to 49–62; that stretch reads KLYNRYLLESQNVE. A helical transmembrane segment spans residues 63 to 82; sequence IIWTILPAFMLIFIALPSLR. Residues 83–227 lie on the Mitochondrial intermembrane side of the membrane; the sequence is LLYLLDDSNS…SFIKWISSNS (145 aa). The Cu cation site is built by histidine 161, cysteine 196, glutamate 198, cysteine 200, histidine 204, and methionine 207. A Mg(2+)-binding site is contributed by glutamate 198.

It belongs to the cytochrome c oxidase subunit 2 family. As to quaternary structure, component of the cytochrome c oxidase (complex IV, CIV), a multisubunit enzyme composed of a catalytic core of 3 subunits and several supernumerary subunits. The complex exists as a monomer or a dimer and forms supercomplexes (SCs) in the inner mitochondrial membrane with ubiquinol-cytochrome c oxidoreductase (cytochrome b-c1 complex, complex III, CIII). The cofactor is Cu cation.

It is found in the mitochondrion inner membrane. The catalysed reaction is 4 Fe(II)-[cytochrome c] + O2 + 8 H(+)(in) = 4 Fe(III)-[cytochrome c] + 2 H2O + 4 H(+)(out). Its function is as follows. Component of the cytochrome c oxidase, the last enzyme in the mitochondrial electron transport chain which drives oxidative phosphorylation. The respiratory chain contains 3 multisubunit complexes succinate dehydrogenase (complex II, CII), ubiquinol-cytochrome c oxidoreductase (cytochrome b-c1 complex, complex III, CIII) and cytochrome c oxidase (complex IV, CIV), that cooperate to transfer electrons derived from NADH and succinate to molecular oxygen, creating an electrochemical gradient over the inner membrane that drives transmembrane transport and the ATP synthase. Cytochrome c oxidase is the component of the respiratory chain that catalyzes the reduction of oxygen to water. Electrons originating from reduced cytochrome c in the intermembrane space (IMS) are transferred via the dinuclear copper A center (CU(A)) of subunit 2 and heme A of subunit 1 to the active site in subunit 1, a binuclear center (BNC) formed by heme A3 and copper B (CU(B)). The BNC reduces molecular oxygen to 2 water molecules using 4 electrons from cytochrome c in the IMS and 4 protons from the mitochondrial matrix. In Ctenocephalides felis (Cat flea), this protein is Cytochrome c oxidase subunit 2 (COII).